Here is a 288-residue protein sequence, read N- to C-terminus: N(1)-aminopropylagmatine ureohydrolase (288 aa).

6 residues coordinate Mn(2+): histidine 114, aspartate 133, histidine 135, aspartate 137, aspartate 213, and aspartate 215.

The protein belongs to the arginase family. Requires Mn(2+) as cofactor.

It localises to the cytoplasm. The enzyme catalyses N(1)-(3-aminopropyl)agmatine + H2O = urea + spermidine. The catalysed reaction is agmatine + H2O = urea + putrescine. The protein operates within amine and polyamine biosynthesis; spermidine biosynthesis. Functionally, involved in the biosynthesis of polyamines which are thought to support the growth of thermophilic microorganisms under high-temperature conditions. It seems that long-chain and branched-chain of polyamines effectively stabilize DNA and RNA, respectively. Catalyzes the decarboxylation of N1-(3-aminopropyl)agmatine to yield spermidine and urea. It can also use agmatine to yield putrescine. The protein is N(1)-aminopropylagmatine ureohydrolase of Thermococcus kodakarensis (strain ATCC BAA-918 / JCM 12380 / KOD1) (Pyrococcus kodakaraensis (strain KOD1)).